We begin with the raw amino-acid sequence, 340 residues long: ATP-dependent 6-phosphofructokinase (340 aa).

Gly11 is an ATP binding site. ADP is bound at residue 21-25 (RAVVR). ATP is bound by residues 72 to 73 (RY) and 102 to 105 (GDGS). Position 103 (Asp103) interacts with Mg(2+). 125–127 (TID) contacts substrate. Asp127 acts as the Proton acceptor in catalysis. Arg154 serves as a coordination point for ADP. Substrate-binding positions include Arg162 and 169-171 (MGR). Residues 185–187 (GAD), Lys211, and 213–215 (KNH) each bind ADP. Substrate-binding positions include Glu222, Arg244, and 250 to 253 (HIQR).

The protein belongs to the phosphofructokinase type A (PFKA) family. ATP-dependent PFK group I subfamily. Prokaryotic clade 'B1' sub-subfamily. Homotetramer. Requires Mg(2+) as cofactor.

Its subcellular location is the cytoplasm. It carries out the reaction beta-D-fructose 6-phosphate + ATP = beta-D-fructose 1,6-bisphosphate + ADP + H(+). The protein operates within carbohydrate degradation; glycolysis; D-glyceraldehyde 3-phosphate and glycerone phosphate from D-glucose: step 3/4. With respect to regulation, allosterically activated by ADP and other diphosphonucleosides, and allosterically inhibited by phosphoenolpyruvate. Catalyzes the phosphorylation of D-fructose 6-phosphate to fructose 1,6-bisphosphate by ATP, the first committing step of glycolysis. The chain is ATP-dependent 6-phosphofructokinase from Lactococcus lactis subsp. lactis (Streptococcus lactis).